Here is a 589-residue protein sequence, read N- to C-terminus: Sulfite reductase [NADPH] hemoprotein beta-component (589 aa).

Residues C443, C449, C488, and C492 each coordinate [4Fe-4S] cluster. C492 is a siroheme binding site.

This sequence belongs to the nitrite and sulfite reductase 4Fe-4S domain family. As to quaternary structure, alpha(8)-beta(8). The alpha component is a flavoprotein, the beta component is a hemoprotein. The cofactor is siroheme. [4Fe-4S] cluster is required as a cofactor.

It carries out the reaction hydrogen sulfide + 3 NADP(+) + 3 H2O = sulfite + 3 NADPH + 4 H(+). It participates in sulfur metabolism; hydrogen sulfide biosynthesis; hydrogen sulfide from sulfite (NADPH route): step 1/1. Component of the sulfite reductase complex that catalyzes the 6-electron reduction of sulfite to sulfide. This is one of several activities required for the biosynthesis of L-cysteine from sulfate. The sequence is that of Sulfite reductase [NADPH] hemoprotein beta-component from Neisseria meningitidis serogroup C / serotype 2a (strain ATCC 700532 / DSM 15464 / FAM18).